The primary structure comprises 547 residues: Glucose-6-phosphate isomerase (547 aa).

Glu-351 (proton donor) is an active-site residue. Active-site residues include His-382 and Lys-509.

Belongs to the GPI family.

It is found in the cytoplasm. The catalysed reaction is alpha-D-glucose 6-phosphate = beta-D-fructose 6-phosphate. The protein operates within carbohydrate biosynthesis; gluconeogenesis. It participates in carbohydrate degradation; glycolysis; D-glyceraldehyde 3-phosphate and glycerone phosphate from D-glucose: step 2/4. In terms of biological role, catalyzes the reversible isomerization of glucose-6-phosphate to fructose-6-phosphate. This Coxiella burnetii (strain CbuK_Q154) (Coxiella burnetii (strain Q154)) protein is Glucose-6-phosphate isomerase.